A 72-amino-acid polypeptide reads, in one-letter code: Lantibiotic lichenicidin VK21 A2 (72 aa).

The interval 1–21 (MKTMKNSAAREAFKGANHPAG) is disordered. A propeptide spanning residues 1–40 (MKTMKNSAAREAFKGANHPAGMVSEEELKALVGGNDVNPE) is cleaved from the precursor. Position 41 is a 2-oxobutanoic acid (threonine 41). Residues threonine 42, threonine 45, and threonine 46 each carry the (Z)-2,3-didehydrobutyrine modification. Positions 47–51 (SSWTC) form a cross-link, lanthionine (Ser-Cys). The residue at position 48 (serine 48) is a 2,3-didehydroalanine (Ser). (Z)-2,3-didehydrobutyrine is present on residues threonine 53 and threonine 57. The segment at residues 59-63 (SASLC) is a cross-link (lanthionine (Ser-Cys)). 2 cross-links (beta-methyllanthionine (Thr-Cys)) span residues 65-68 (TTKC) and 69-72 (TSRC). Threonine 66 carries the (Z)-2,3-didehydrobutyrine modification.

Maturation of lantibiotics involves the enzymatic conversion of Thr, and Ser into dehydrated AA and the formation of thioether bonds with cysteine. This is followed by membrane translocation and cleavage of the modified precursor. Post-translationally, the 2,3-didehydrobutyrines are determined to be the Z-isomers.

It is found in the secreted. Lanthionine-containing peptide antibiotic (lantibiotic) active on Gram-positive bacteria. The bactericidal activity of lantibiotics is based on depolarization of energized bacterial cytoplasmic membranes, initiated by the formation of aqueous transmembrane pores. When present individually, LchA2 exhibits activity towards B.subtilis L1 (IC(50)=30 uM), Rhodococcus sp. SS2 (IC(50)=16.6 uM), M.luteus B1314 (IC(50)=2.6 uM), B.megaterium VKM41 (IC(50)=2 uM), S.aureus 209p (IC(50)=20 uM), B.pumilus 2001, B.globigii I, B.amyloliquefaciens I, M.smegmatis 1171 and M.phlei 1291. However, when combined with LchA1, it displays much stronger activity against B.subtilis L1 (IC(50)=0.64 uM), Rhodococcus sp. SS2 (IC(50)=0.64 uM), M.luteus B1314 (IC(50)=0.09 uM), B.megaterium VKM41 (IC(50)=0.12 uM) and S.aureus 209p (IC(50)=0.64 uM). The activity of the combined LchA1 and LchA2 peptides is strongest at a molar ratio of 1. Even when applied at 17-fold concentration of the highest IC(50) values for Gram-positive bacteria, neither the individual nor the combined peptides display activity against Gram-negative bacteria P.aeruginosa PAO1, P.putida I-97 or E.coli C600. This chain is Lantibiotic lichenicidin VK21 A2, found in Bacillus licheniformis.